A 340-amino-acid chain; its full sequence is Delta(1)-pyrroline-2-carboxylate reductase 2 (340 aa).

The active-site Charge relay system is S50. H51 acts as the Proton donor in catalysis. R55 contributes to the substrate binding site. 123–127 (HFSAL) contributes to the NADP(+) binding site. T163 is a substrate binding site. 181–183 (DFA) provides a ligand contact to NADP(+). 189–190 (RG) is a binding site for substrate. D191 functions as the Charge relay system in the catalytic mechanism. NADP(+) is bound by residues 232 to 233 (HK) and 307 to 313 (RLPSQRR).

It belongs to the LDH2/MDH2 oxidoreductase family. As to quaternary structure, homodimer.

The enzyme catalyses L-proline + NAD(+) = 1-pyrroline-2-carboxylate + NADH + H(+). It catalyses the reaction L-proline + NADP(+) = 1-pyrroline-2-carboxylate + NADPH + H(+). Catalyzes the reduction of Delta(1)-pyrroline-2-carboxylate (Pyr2C) to L-proline, using NADPH as the electron donor. May be involved in a degradation pathway that converts trans-3-hydroxy-L-proline (t3LHyp) to L-proline. This chain is Delta(1)-pyrroline-2-carboxylate reductase 2, found in Burkholderia multivorans (strain ATCC 17616 / 249).